Reading from the N-terminus, the 189-residue chain is dTTP/UTP pyrophosphatase (189 aa).

Asp70 acts as the Proton acceptor in catalysis. A disulfide bridge links Cys74 with Cys79.

It belongs to the Maf family. YhdE subfamily. As to quaternary structure, homodimer. A divalent metal cation is required as a cofactor.

Its subcellular location is the cytoplasm. It carries out the reaction dTTP + H2O = dTMP + diphosphate + H(+). It catalyses the reaction UTP + H2O = UMP + diphosphate + H(+). The catalysed reaction is CTP + H2O = CMP + diphosphate + H(+). The enzyme catalyses psi-UTP + H2O = psi-UMP + diphosphate + H(+). It carries out the reaction 5-methyl-CTP + H2O = 5-methyl-CMP + diphosphate + H(+). It catalyses the reaction 5-methyl-UTP + H2O = 5-methyl-UMP + diphosphate + H(+). In terms of biological role, nucleoside triphosphate pyrophosphatase that hydrolyzes dTTP and UTP. Can also hydrolyze CTP and the modified nucleotides pseudo-UTP, 5-methyl-CTP (m(5)CTP) and 5-methyl-UTP (m(5)UTP). May have a dual role in cell division arrest and in preventing the incorporation of modified nucleotides into cellular nucleic acids. The chain is dTTP/UTP pyrophosphatase from Bacillus subtilis (strain 168).